Reading from the N-terminus, the 651-residue chain is MKLEMSSYLHKVPNTGITNLSNSKSIVFIMFCATLLFIITSSRYLTGSESLGQIPSEIPKSSEQLNEELSQQINSKLHKLASFDKFNSFPLLNKHMKDDIYGLMTLETFTDPLPYLENYNEEEYSQQNYPICSEKLMFPSKIKLTKQQYLPADLQQFLGVLNNMRPYHDMVEKAKAYFISDLREEKKWFRFAGSSIWLPQFQCHYMVSRYLYSPNGVANHAFASFLYIQLFDSDWKELPSHTTLDIPFEQTEANSIFKIFKPKQKYANFRNSTYPQILPIPFDYKLPIETKKYYYGPEDPRILLRSNPLGFDEPLIVFNMKGLKLTKRVMYSYLPFSNTLKLLKKRREPFANIEKNWTPFKSVAQPSKTQTTIHFIYSMIPLEVLACDIDSGLCDILQKPAKHDFNYVGGLRGGTQLVSLPLNETIPSEIRAKLPIPKNRQVYIGWARTHLNNCGCGDSMYRPNFITLVEDYDDVTDKYYYKIGDISGYFDFAAKIEPWSKQVLDEEGNLYEKAEQCQGRNVLIPNSIAYWDVGSIKLAGTEYQKHDFKDMFSSGKVSDFNANEIVFNDYMGVTLSSADRDVSIVHVKGLLNYILQLPSLVDDSLVINKEWTFQKKGHDLNVRCAMIASKEYCKSYAIKQGVKIDEKSEET.

The Cytoplasmic segment spans residues 1 to 19; the sequence is MKLEMSSYLHKVPNTGITN. The chain crosses the membrane as a helical span at residues 20-42; that stretch reads LSNSKSIVFIMFCATLLFIITSS. Over 43–651 the chain is Extracellular; that stretch reads RYLTGSESLG…VKIDEKSEET (609 aa). N-linked (GlcNAc...) asparagine glycans are attached at residues asparagine 271 and asparagine 423.

This sequence belongs to the BMT family.

It localises to the membrane. Functionally, beta-mannosyltransferase involved in cell wall biosynthesis through beta-1,2-mannosylation of cell wall phosphopeptidomannan. The chain is Beta-mannosyltransferase 7 (BMT7) from Candida albicans (strain SC5314 / ATCC MYA-2876) (Yeast).